Reading from the N-terminus, the 432-residue chain is 5'-deoxyadenosine deaminase (432 aa).

The Zn(2+) site is built by His63 and His65. The substrate site is built by Glu92 and His184. His211 contributes to the Zn(2+) binding site. Substrate contacts are provided by Glu214 and Asp299. Asp299 is a binding site for Zn(2+).

The protein belongs to the metallo-dependent hydrolases superfamily. MTA/SAH deaminase family. Homotetramer. It depends on Zn(2+) as a cofactor.

It carries out the reaction 5'-deoxyadenosine + H2O + H(+) = 5'-deoxyinosine + NH4(+). It catalyses the reaction S-adenosyl-L-homocysteine + H2O + H(+) = S-inosyl-L-homocysteine + NH4(+). The catalysed reaction is S-methyl-5'-thioadenosine + H2O + H(+) = S-methyl-5'-thioinosine + NH4(+). The enzyme catalyses adenosine + H2O + H(+) = inosine + NH4(+). It functions in the pathway amino-acid biosynthesis; S-adenosyl-L-methionine biosynthesis. Functionally, catalyzes the deamination of three SAM-derived enzymatic products, namely 5'-deoxyadenosine, S-adenosyl-L-homocysteine, and 5'-methylthioadenosine, to produce the inosine analogs. Can also deaminate adenosine. The preferred substrate for this enzyme is 5'-deoxyadenosine, but all these substrates are efficiently deaminated. Likely functions in a S-adenosyl-L-methionine (SAM) recycling pathway from S-adenosyl-L-homocysteine (SAH) produced from SAM-dependent methylation reactions. May also be involved in the recycling of 5'-deoxyadenosine, whereupon the 5'-deoxyribose moiety of 5'-deoxyinosine is further metabolized to deoxyhexoses used for the biosynthesis of aromatic amino acids in methanogens. This is 5'-deoxyadenosine deaminase from Methanosarcina mazei (strain ATCC BAA-159 / DSM 3647 / Goe1 / Go1 / JCM 11833 / OCM 88) (Methanosarcina frisia).